We begin with the raw amino-acid sequence, 1135 residues long: Glutamate receptor ionotropic, NMDA 3A (1135 aa).

The signal sequence occupies residues 1–23 (MRRLSLWWLLSRVCLLLPPPCAL). The Extracellular portion of the chain corresponds to 24-674 (VLAGVPSSSS…PIGAFMWPLH (651 aa)). The segment at 60 to 117 (TAPRAASRAQEGGRAGAQRDDPESGTWRPPAPSQGARWLGSALHGRGPPGSRKLGEGA) is disordered. Asparagine 145, asparagine 264, asparagine 275, asparagine 285, asparagine 296, asparagine 300, asparagine 426, asparagine 439, asparagine 549, and asparagine 565 each carry an N-linked (GlcNAc...) asparagine glycan. 2 disulfides stabilise this stretch: cysteine 537/cysteine 575 and cysteine 543/cysteine 576. Serine 631, serine 633, and arginine 638 together coordinate glycine. 2 residues coordinate D-serine: serine 633 and arginine 638. The chain crosses the membrane as a helical span at residues 675–694 (WTMWLGIFVALHITAIFLTL). The Cytoplasmic segment spans residues 695 to 715 (YEWKSPFGMTPKGRNRNKVFS). Positions 716–727 (FSSALNVCYALL) form an intramembrane region, discontinuously helical. Residues 728–741 (FGRTAAIKPPKCWT) lie on the Cytoplasmic side of the membrane. A helical membrane pass occupies residues 742-761 (GRFLMNLWAIFCMFCLSTYT). The Extracellular segment spans residues 762 to 932 (ANLAAVMVGE…TLQMGIKHFS (171 aa)). Serine 801 provides a ligand contact to glycine. The D-serine site is built by serine 801, alanine 802, and aspartate 845. Aspartate 845 is a glycine binding site. Cysteines 859 and 913 form a disulfide. A glycan (N-linked (GlcNAc...) asparagine) is linked at asparagine 886. Residues 933–948 (GLFVLLCIGFGLSILT) form a helical membrane-spanning segment. Over 949-1135 (TIGEHIVHRL…YQKTNRTCES (187 aa)) the chain is Cytoplasmic. Residues 951 to 987 (GEHIVHRLLLPRIKNKSKLQYWLHTSQRFHRALNTSF) form a PPP2CB binding site region. Residues 1080–1129 (TTNGKADSLNVTRSSVIQELSELEKQIQVIRQELQLAVSRKTELEEYQKT) adopt a coiled-coil conformation. The segment at 1082–1115 (NGKADSLNVTRSSVIQELSELEKQIQVIRQELQL) is GIT1-binding.

The protein belongs to the glutamate-gated ion channel (TC 1.A.10.1) family. NR3A/GRIN3A subfamily. Heterotetramer. Forms heterotetrameric channels composed of two GluN1/zeta subunits (GRIN1), and two identical GluN3 subunits (GRIN3A or GRIN3B) (in vitro). Can also form heterotetrameric channels that contain at least two GluN1 subunits and at least a combination of one GluN2 and one GluN3 subunits (in vitro). Does not form functional homomeric channels. Found in a complex with GRIN1, GRIN2A or GRIN2B and PPP2CB. Probably interacts with PPP2CB. No complex with PPP2CB is detected when NMDARs are stimulated by NMDA. Interacts (via C-terminus) with GIT1, but not with GRIA1/GluA1, nor with synaptophysin/SYP; this interaction competes with GIT1 interaction with ARHGEF7/beta-PIX. Post-translationally, N-glycosylated. In terms of tissue distribution, isoform 1 and isoform 2 are expressed in olfactory bulb, frontal occipital, entorhinal and pyriform cortices, hippocampus, striatum, thalamus, cerebellum and spinal cord.

The protein resides in the cell membrane. Its subcellular location is the postsynaptic cell membrane. It is found in the postsynaptic density. The enzyme catalyses Ca(2+)(in) = Ca(2+)(out). The catalysed reaction is Na(+)(in) = Na(+)(out). Its activity is regulated as follows. Excitatory glycine receptors are inhibited by D-serine at a concentrion of 10uM. In terms of biological role, component of a non-conventional N-methyl-D-aspartate (NMDA) receptors (NMDARs) that function as heterotetrameric, ligand-gated cation channels with low calcium permeability and low voltage-dependent block by Mg(2+). During the development of neural circuits, participates in the synaptic refinement period, restricting spine maturation and growth. Forms glutamatergic receptor complexes with GluN1 and GluN2 subunits which are activated by glycine binding to the GluN1 and GluN3 subunits and L-glutamate binding to GluN2 subunits. Forms excitatory glycinergic receptor complexes with GluN1 alone which are activated by glycine binding to the GluN1 and GluN3 subunits. GluN3A subunit also binds D-serine. Each GluN3 subunit confers differential attributes to channel properties, including activation, deactivation and desensitization kinetics, pH sensitivity, Ca2(+) permeability, and binding to allosteric modulators. By competing with GIT1 interaction with ARHGEF7/beta-PIX, may reduce GIT1/ARHGEF7-regulated local activation of RAC1, hence affecting signaling and limiting the maturation and growth of inactive synapses. In Rattus norvegicus (Rat), this protein is Glutamate receptor ionotropic, NMDA 3A.